A 189-amino-acid chain; its full sequence is Interferon alpha-1 (189 aa).

An N-terminal signal peptide occupies residues 1–23 (MARLCAFLMVLAVLSYWPTCSLG). Disulfide bonds link cysteine 24–cysteine 122 and cysteine 52–cysteine 162. N-linked (GlcNAc...) asparagine glycosylation is present at asparagine 101.

The protein belongs to the alpha/beta interferon family. As to quaternary structure, interacts with CR2. Post-translationally, glycosylated.

The protein localises to the secreted. Functionally, produced by macrophages, IFN-alpha have antiviral activities. Interferon stimulates the production of two enzymes: a protein kinase and an oligoadenylate synthetase. This Mus musculus (Mouse) protein is Interferon alpha-1 (Ifna1).